We begin with the raw amino-acid sequence, 251 residues long: MIELGVNIDHIATIRQARRTYEPDPVWGAVEAHLGGADGITVHLREDRRHIQDSDVRRLRETTQIKLNLEMAATDEMVGIACGLKPEMAMLVPEGRHEVTTEGGLDILAQEARLKGVISRLADAGIVTSVFIDADPEQIEAAARIGASVCEIHTGPYAHAFYDKGRDAEAPAVLAEIAKIRKAGQTIRHLGMRFNAGHALNYYNVQPLARLAGIRELHIGHAIVSRAVFVGLREAVREMKVLMREAAERGE.

N7 is a binding site for 3-amino-2-oxopropyl phosphate. 1-deoxy-D-xylulose 5-phosphate is bound at residue 9-10 (DH). Residue R18 participates in 3-amino-2-oxopropyl phosphate binding. H43 (proton acceptor) is an active-site residue. Positions 45 and 50 each coordinate 1-deoxy-D-xylulose 5-phosphate. The active-site Proton acceptor is E70. Residue T100 coordinates 1-deoxy-D-xylulose 5-phosphate. H198 functions as the Proton donor in the catalytic mechanism. 3-amino-2-oxopropyl phosphate contacts are provided by residues A199 and 220 to 221 (GH).

This sequence belongs to the PNP synthase family. As to quaternary structure, homooctamer; tetramer of dimers.

It is found in the cytoplasm. The enzyme catalyses 3-amino-2-oxopropyl phosphate + 1-deoxy-D-xylulose 5-phosphate = pyridoxine 5'-phosphate + phosphate + 2 H2O + H(+). It functions in the pathway cofactor biosynthesis; pyridoxine 5'-phosphate biosynthesis; pyridoxine 5'-phosphate from D-erythrose 4-phosphate: step 5/5. In terms of biological role, catalyzes the complicated ring closure reaction between the two acyclic compounds 1-deoxy-D-xylulose-5-phosphate (DXP) and 3-amino-2-oxopropyl phosphate (1-amino-acetone-3-phosphate or AAP) to form pyridoxine 5'-phosphate (PNP) and inorganic phosphate. The chain is Pyridoxine 5'-phosphate synthase from Dechloromonas aromatica (strain RCB).